The chain runs to 597 residues: Kelch-like protein 21 (597 aa).

In terms of domain architecture, BTB spans 35 to 103 (LDVTLEAAGG…SYTGRVAVSG (69 aa)). Residues 138 to 239 (CLDMQDFAEA…RRFYLLAHVE (102 aa)) form the BACK domain. Kelch repeat units lie at residues 287–335 (ILVL…ALGN), 336–382 (DIYV…VLDG), 384–422 (LYVV…ACRG), 423–470 (RLYA…TLNG), 472–512 (MYFV…VLGG), and 513–560 (KLYV…SIFR). The segment at 570-597 (GRGFELNSGSNDVDAGYHRLPQNPEELH) is disordered.

As to quaternary structure, component of the BCR(KLHL21) E3 ubiquitin ligase complex, at least composed of CUL3, KLHL21 and RBX1.

Its subcellular location is the cytoplasm. It localises to the cytoskeleton. The protein resides in the spindle. Its pathway is protein modification; protein ubiquitination. Substrate-specific adapter of a BCR (BTB-CUL3-RBX1) E3 ubiquitin-protein ligase complex required for efficient chromosome alignment and cytokinesis. The BCR(KLHL21) E3 ubiquitin ligase complex regulates localization of the chromosomal passenger complex (CPC) from chromosomes to the spindle midzone in anaphase and mediates the ubiquitination of AURKB. Ubiquitination of AURKB by BCR(KLHL21) E3 ubiquitin ligase complex may not lead to its degradation by the proteasome. This chain is Kelch-like protein 21 (Klhl21), found in Mus musculus (Mouse).